The sequence spans 261 residues: 5'-nucleotidase SurE (261 aa).

A divalent metal cation-binding residues include aspartate 8, aspartate 9, serine 43, and asparagine 96.

The protein belongs to the SurE nucleotidase family. A divalent metal cation serves as cofactor.

The protein resides in the cytoplasm. It carries out the reaction a ribonucleoside 5'-phosphate + H2O = a ribonucleoside + phosphate. In terms of biological role, nucleotidase that shows phosphatase activity on nucleoside 5'-monophosphates. The protein is 5'-nucleotidase SurE of Dinoroseobacter shibae (strain DSM 16493 / NCIMB 14021 / DFL 12).